The following is a 75-amino-acid chain: uncharacterized protein (75 aa).

This is an uncharacterized protein from Homo sapiens (Human).